The following is a 281-amino-acid chain: Transcription factor HES-1 (281 aa).

The segment at 1–44 is disordered; the sequence is MPADIMEKNSSSPVAATPASVNTTPDKPKTASEHRKSSKPIMEK. The span at 10–21 shows a compositional bias: low complexity; sequence SSSPVAATPASV. A compositionally biased stretch (basic and acidic residues) spans 26–35; that stretch reads DKPKTASEHR. The 58-residue stretch at 34 to 91 folds into the bHLH domain; sequence HRKSSKPIMEKRRRARINESLSQLKTLILDALKKDSSRHSKLEKADILEMTVKHLRNL. Residues 110–143 form the Orange domain; it reads YRAGFSECMNEVTRFLSTCEGVNTEVRTRLLGHL. Disordered stretches follow at residues 158 to 206 and 255 to 281; these read QAHP…PCKL and TSVGPNAVSPSSGSSLTADSMWRPWRN. Composition is skewed to pro residues over residues 164–174 and 182–201; these read QAPPPPPPSGP and FAPPPPLVPIPGGAAPPPGS. Residues 255-272 show a composition bias toward polar residues; the sequence is TSVGPNAVSPSSGSSLTA. Residues 276–279 carry the WRPW motif motif; the sequence is WRPW.

In terms of assembly, interacts with SIRT1. Interacts weakly with TLE2. Interacts with HES6. Transcription repression requires formation of a complex with a corepressor protein of the Groucho/TLE family. Interacts (via WPRW motif) with TLE1. Interacts with an FA complex, composed of FANCA, FANCF, FANCG and FANCL, but not of FANCC, nor FANCE. As to expression, present in all tissues examined but highest in epithelial cells and in mesoderm-derived tissues such as embryonal muscle cells.

It is found in the nucleus. In terms of biological role, transcriptional repressor of genes that require a bHLH protein for their transcription. May act as a negative regulator of myogenesis by inhibiting the functions of MYOD1 and ASH1. Binds DNA on N-box motifs: 5'-CACNAG-3' with high affinity and on E-box motifs: 5'-CANNTG-3' with low affinity. May play a role in a functional FA core complex response to DNA cross-link damage, being required for the stability and nuclear localization of FA core complex proteins, as well as for FANCD2 monoubiquitination in response to DNA damage. The sequence is that of Transcription factor HES-1 (Hes1) from Rattus norvegicus (Rat).